The chain runs to 329 residues: MNNGMQIFDYEDIQMIPNKCVVQSRKEVDTSVKFGPHTFKIPVVPANMQTIIDEPLAIWLAEHDYFYIMHRFQPERRMDFVRDMKKRGLIASISVGVKDDEFDFIEALAANELTPDYITIDIAHGYAQVVIDMIQHIKHYLPNAFVIAGNVGTPEAVRELENAGADATKVGIGPGKVCITKLKTGFGTGGWQLAAVRWCAKAARKPIIADGGIRNNGDIAKSIRFGATMCMIGSLFAGHEETPGKHVNIDGKEYQEYYGSASEYQKGTHHNVEGKKILLPVKGKIGDTLKEMQEDLQSAVSYAGGRDLESLTKVDYVIVKNSIFNGDQY.

C178 (thioimidate intermediate) is an active-site residue. 207-230 (IIADGGIRNNGDIAKSIRFGATMC) serves as a coordination point for NADP(+).

Belongs to the IMPDH/GMPR family. GuaC type 2 subfamily.

The catalysed reaction is IMP + NH4(+) + NADP(+) = GMP + NADPH + 2 H(+). Functionally, catalyzes the irreversible NADPH-dependent deamination of GMP to IMP. It functions in the conversion of nucleobase, nucleoside and nucleotide derivatives of G to A nucleotides, and in maintaining the intracellular balance of A and G nucleotides. This chain is GMP reductase, found in Lacticaseibacillus paracasei (strain ATCC 334 / BCRC 17002 / CCUG 31169 / CIP 107868 / KCTC 3260 / NRRL B-441) (Lactobacillus paracasei).